A 372-amino-acid polypeptide reads, in one-letter code: Putative 8-amino-7-oxononanoate synthase (372 aa).

Substrate is bound at residue Arg-20. Gly-94–Tyr-95 serves as a coordination point for pyridoxal 5'-phosphate. His-119 is a substrate binding site. Pyridoxal 5'-phosphate-binding positions include Ser-167, Asp-192–His-195, and Thr-223–Lys-226. The residue at position 226 (Lys-226) is an N6-(pyridoxal phosphate)lysine. Thr-337 contacts substrate.

It belongs to the class-II pyridoxal-phosphate-dependent aminotransferase family. BioF subfamily. Homodimer. Pyridoxal 5'-phosphate is required as a cofactor.

The enzyme catalyses 6-carboxyhexanoyl-[ACP] + L-alanine + H(+) = (8S)-8-amino-7-oxononanoate + holo-[ACP] + CO2. It functions in the pathway cofactor biosynthesis; biotin biosynthesis. Catalyzes the decarboxylative condensation of pimeloyl-[acyl-carrier protein] and L-alanine to produce 8-amino-7-oxononanoate (AON), [acyl-carrier protein], and carbon dioxide. In Methanocaldococcus jannaschii (strain ATCC 43067 / DSM 2661 / JAL-1 / JCM 10045 / NBRC 100440) (Methanococcus jannaschii), this protein is Putative 8-amino-7-oxononanoate synthase (bioF).